The primary structure comprises 94 residues: Small ribosomal subunit protein uS19 (94 aa).

It belongs to the universal ribosomal protein uS19 family.

In terms of biological role, protein S19 forms a complex with S13 that binds strongly to the 16S ribosomal RNA. The protein is Small ribosomal subunit protein uS19 of Endomicrobium trichonymphae.